A 131-amino-acid polypeptide reads, in one-letter code: Fumarate reductase subunit C (131 aa).

Helical transmembrane passes span 30–50, 61–81, and 110–130; these read EGTA…LFAL, IGFL…AAAL, and IKGL…VALF.

This sequence belongs to the FrdC family. Part of an enzyme complex containing four subunits: a flavoprotein (FrdA), an iron-sulfur protein (FrdB), and two hydrophobic anchor proteins (FrdC and FrdD).

It is found in the cell inner membrane. Its function is as follows. Two distinct, membrane-bound, FAD-containing enzymes are responsible for the catalysis of fumarate and succinate interconversion; fumarate reductase is used in anaerobic growth, and succinate dehydrogenase is used in aerobic growth. Anchors the catalytic components of the fumarate reductase complex to the cell inner membrane, binds quinones. The chain is Fumarate reductase subunit C from Klebsiella pneumoniae (strain 342).